The primary structure comprises 391 residues: MGRTVQDELEQIRAKGLFRSTRLIQGRQSARVTMEGRQLLLLCSNNYLGLAEHPALIAASMAAAEQFGSSSGASRLVSGSMEPHEALETAVAAFKRTESALAFNSGYAANTGIIQALVGRGDVIFCDRLNHASIIDGALLSGARLVRYPHNDAVALAGLMEKQRGTGRCLIVSDGVFSMDGDLAPLAELAELRRRHDALLMVDDAHGCGVLGEQGRGSAELLGVLSHIDIHVGTFGKALGSFGAYAALSRELRDLLVNRARSFIFSTSLPPAVLAVSTAALELVQAAEGDELRKRLRDNTSLFRGLLRDAGFFLGEGNTQIVPILTGGAEETMDFSRQLLEEGMFVQGIRPPTVPAGACRLRCTVMATHSPQDLTWAAERITHIGRRLGVV.

A substrate-binding site is contributed by arginine 19. 106 to 107 is a pyridoxal 5'-phosphate binding site; the sequence is GY. Histidine 131 lines the substrate pocket. Positions 178, 206, and 234 each coordinate pyridoxal 5'-phosphate. N6-(pyridoxal phosphate)lysine is present on lysine 237. Threonine 353 is a substrate binding site.

It belongs to the class-II pyridoxal-phosphate-dependent aminotransferase family. BioF subfamily. Homodimer. Pyridoxal 5'-phosphate is required as a cofactor.

It catalyses the reaction 6-carboxyhexanoyl-[ACP] + L-alanine + H(+) = (8S)-8-amino-7-oxononanoate + holo-[ACP] + CO2. It functions in the pathway cofactor biosynthesis; biotin biosynthesis. In terms of biological role, catalyzes the decarboxylative condensation of pimeloyl-[acyl-carrier protein] and L-alanine to produce 8-amino-7-oxononanoate (AON), [acyl-carrier protein], and carbon dioxide. This Pelobacter propionicus (strain DSM 2379 / NBRC 103807 / OttBd1) protein is 8-amino-7-oxononanoate synthase.